A 188-amino-acid polypeptide reads, in one-letter code: Photosystem I assembly protein Ycf4 (188 aa).

A run of 2 helical transmembrane segments spans residues Tyr26 to Ser46 and Leu68 to Ile88.

The protein belongs to the Ycf4 family.

The protein resides in the cellular thylakoid membrane. Seems to be required for the assembly of the photosystem I complex. The protein is Photosystem I assembly protein Ycf4 of Synechococcus elongatus (strain ATCC 33912 / PCC 7942 / FACHB-805) (Anacystis nidulans R2).